The sequence spans 536 residues: Alpha-1,3-mannosyl-glycoprotein 4-beta-N-acetylglucosaminyltransferase A (536 aa).

Over methionine 1–glycine 6 the chain is Cytoplasmic. A helical; Signal-anchor for type II membrane protein membrane pass occupies residues threonine 7–tryptophan 27. Residues glutamine 28–arginine 54 are a coiled coil. Residues glutamine 28–aspartate 536 lie on the Lumenal side of the membrane. N-linked (GlcNAc...) asparagine glycosylation is found at asparagine 77 and asparagine 458.

The protein belongs to the glycosyltransferase 54 family. A divalent metal cation is required as a cofactor. N-glycosylated.

Its subcellular location is the golgi apparatus membrane. It is found in the secreted. The catalysed reaction is N(4)-{beta-D-GlcNAc-(1-&gt;2)-alpha-D-Man-(1-&gt;3)-[beta-D-GlcNAc-(1-&gt;2)-alpha-D-Man-(1-&gt;6)]-beta-D-Man-(1-&gt;4)-beta-D-GlcNAc-(1-&gt;4)-beta-D-GlcNAc}-L-asparaginyl-[protein] + UDP-N-acetyl-alpha-D-glucosamine = N(4)-{beta-D-GlcNAc-(1-&gt;2)-[beta-D-GlcNAc-(1-&gt;4)]-alpha-D-Man-(1-&gt;3)-[beta-D-GlcNAc-(1-&gt;2)-alpha-D-Man-(1-&gt;6)]-beta-D-Man-(1-&gt;4)-beta-D-GlcNAc-(1-&gt;4)-beta-D-GlcNAc}-L-asparaginyl-[protein] + UDP + H(+). It carries out the reaction an N(4)-{beta-D-GlcNAc-(1-&gt;2)-alpha-D-Man-(1-&gt;3)-[alpha-D-Man-(1-&gt;6)]-beta-D-Man-(1-&gt;4)-beta-D-GlcNAc-(1-&gt;4)-beta-D-GlcNAc}-L-asparaginyl-[protein] + UDP-N-acetyl-alpha-D-glucosamine = an N(4)-{beta-D-GlcNAc-(1-&gt;2)-[beta-D-GlcNAc-(1-&gt;4)]-alpha-D-Man-(1-&gt;3)-[alpha-D-Man-(1-&gt;6)]-beta-D-Man-(1-&gt;4)-beta-D-GlcNAc-(1-&gt;4)-beta-D-GlcNAc}-L-asparaginyl-[protein] + UDP + H(+). The enzyme catalyses an N(4)-{beta-D-GlcNAc-(1-&gt;2)-alpha-D-Man-(1-&gt;3)-[beta-D-GlcNAc-(1-&gt;2)-[beta-D-GlcNAc-(1-&gt;6)]-alpha-D-Man-(1-&gt;6)]-beta-D-Man-(1-&gt;4)-beta-D-GlcNAc-(1-&gt;4)-beta-D-GlcNAc}-L-asparaginyl-[protein] + UDP-N-acetyl-alpha-D-glucosamine = an N(4)-{beta-D-GlcNAc-(1-&gt;2)-[beta-D-GlcNAc-(1-&gt;4)]-alpha-D-Man-(1-&gt;3)-[beta-D-GlcNAc-(1-&gt;2)-[beta-D-GlcNAc-(1-&gt;6)]-alpha-D-Man-(1-&gt;6)]-beta-D-Man-(1-&gt;4)-beta-D-GlcNAc-(1-&gt;4)-beta-D-GlcNAc}-L-asparaginyl-[protein] + UDP + H(+). It catalyses the reaction an N(4)-{beta-D-GlcNAc-(1-&gt;2)-alpha-D-Man-(1-&gt;3)-[beta-D-GlcNAc-(1-&gt;2)-alpha-D-Man-(1-&gt;6)]-beta-D-Man-(1-&gt;4)-beta-D-GlcNAc-(1-&gt;4)-[alpha-L-Fuc-(1-&gt;6)]-beta-D-GlcNAc}-L-asparaginyl-[protein] + UDP-N-acetyl-alpha-D-glucosamine = N(4)-{beta-D-GlcNAc-(1-&gt;2)-[beta-D-GlcNAc-(1-&gt;4)]-alpha-D-Man-(1-&gt;3)-[beta-D-GlcNAc-(1-&gt;2)-alpha-D-Man-(1-&gt;6)]-beta-D-Man-(1-&gt;4)-beta-D-GlcNAc-(1-&gt;4)-[alpha-L-Fuc-(1-&gt;6)]-beta-D-GlcNAc}-asparaginyl-[protein] + UDP + H(+). The catalysed reaction is an N(4)-{beta-D-GlcNAc-(1-&gt;2)-alpha-D-Man-(1-&gt;3)-[beta-D-Gal-(1-&gt;4)-beta-D-GlcNAc-(1-&gt;2)-alpha-D-Man-(1-&gt;6)]-beta-D-Man-(1-&gt;4)-beta-D-GlcNAc-(1-&gt;4)-beta-D-GlcNAc}-L-asparaginyl-[protein] + UDP-N-acetyl-alpha-D-glucosamine = an N(4)-{beta-D-GlcNAc-(1-&gt;2)-[beta-D-GlcNAc-(1-&gt;4)]-alpha-D-Man-(1-&gt;3)-[beta-D-Gal-(1-&gt;4)-beta-D-GlcNAc-(1-&gt;2)-alpha-D-Man-(1-&gt;6)]-beta-D-Man-(1-&gt;4)-beta-D-GlcNAc-(1-&gt;4)-beta-D-GlcNAc}-L-asparaginyl-[protein] + UDP + H(+). It carries out the reaction N(4)-{beta-D-GlcNAc-(1-&gt;2)-alpha-D-Man-(1-&gt;3)-[alpha-D-Man-(1-&gt;3)-{alpha-D-Man-(1-&gt;6)}-alpha-D-Man-(1-&gt;6)]-beta-D-Man-(1-&gt;4)-beta-D-GlcNAc-(1-&gt;4)-beta-D-GlcNAc}-asparaginyl-[protein] + UDP-N-acetyl-alpha-D-glucosamine = N(4)-{beta-D-GlcNAc-(1-&gt;2)-[beta-D-GlcNAc-(1-&gt;4)]-alpha-D-Man-(1-&gt;3)-[alpha-D-Man-(1-&gt;3)-{alpha-D-Man-(1-&gt;6)}-alpha-D-Man-(1-&gt;6)]-beta-D-Man-(1-&gt;4)-beta-D-GlcNAc-(1-&gt;4)-beta-D-GlcNAc}-asparaginyl-[protein] + UDP + H(+). The enzyme catalyses N(4)-{beta-D-GlcNAc-(1-&gt;2)-alpha-D-Man-(1-&gt;3)-beta-D-Man-(1-&gt;4)-beta-D-GlcNAc-(1-&gt;4)-beta-D-GlcNAc}-asparaginyl-[protein] + UDP-N-acetyl-alpha-D-glucosamine = N(4)-{beta-D-GlcNAc-(1-&gt;2)-[beta-D-GlcNAc-(1-&gt;4)]-alpha-D-Man-(1-&gt;3)-beta-D-Man-(1-&gt;4)-beta-D-GlcNAc-(1-&gt;4)-beta-D-GlcNAc}-asparaginyl-[protein] + UDP + H(+). Its pathway is protein modification; protein glycosylation. With respect to regulation, inhibited by UDP. Functionally, glycosyltransferase that catalyze the transfer of GlcNAc from UDP-GlcNAc to the GlcNAcbeta1-2Manalpha1-3 arm of the core structure of N-linked glycans through a beta1-4 linkage and participates in the production of tri- and tetra-antennary N-linked sugar chains. Involved in glucose transport by mediating SLC2A2/GLUT2 glycosylation, thereby controlling cell-surface expression of SLC2A2 in pancreatic beta cells. This chain is Alpha-1,3-mannosyl-glycoprotein 4-beta-N-acetylglucosaminyltransferase A, found in Xenopus tropicalis (Western clawed frog).